A 480-amino-acid chain; its full sequence is NADH-quinone oxidoreductase subunit N (480 aa).

A run of 13 helical transmembrane segments spans residues 13 to 33 (ISPMLILCGVALLSLVVQFLI), 41 to 61 (PLWVLSILGILVAMYALYHTT), 81 to 101 (VWLSAIYLIAGLITLLVAPPF), 107 to 127 (TLFPEFFPLMLFCLSGMMFLT), 132 to 152 (LIVIFVGLEILSLSLYVMIGM), 167 to 187 (FLLGTFSSGFMLLGIAFLYGG), 212 to 232 (LGLGLFFVGVSFKAALVPFHS), 245 to 265 (ITGFMASAGKASALGLVIILF), 276 to 296 (VWKYLMGTIALISMTWGNIVA), 314 to 334 (AGYIVAGIACGAGLEALYYLF), 373 to 393 (ALALSLVFLSFAGFPPLIGFW), 413 to 433 (LLFGAVANSCIAFYYYMKITI), and 454 to 474 (PTLGFLIFLLCVFFTAGWIFF).

The protein belongs to the complex I subunit 2 family. As to quaternary structure, NDH-1 is composed of 14 different subunits. Subunits NuoA, H, J, K, L, M, N constitute the membrane sector of the complex.

Its subcellular location is the cell inner membrane. The catalysed reaction is a quinone + NADH + 5 H(+)(in) = a quinol + NAD(+) + 4 H(+)(out). Its function is as follows. NDH-1 shuttles electrons from NADH, via FMN and iron-sulfur (Fe-S) centers, to quinones in the respiratory chain. The immediate electron acceptor for the enzyme in this species is believed to be ubiquinone. Couples the redox reaction to proton translocation (for every two electrons transferred, four hydrogen ions are translocated across the cytoplasmic membrane), and thus conserves the redox energy in a proton gradient. In Leptospira biflexa serovar Patoc (strain Patoc 1 / Ames), this protein is NADH-quinone oxidoreductase subunit N.